Reading from the N-terminus, the 78-residue chain is MASEQNIQTFRDFLTQYNLVAEQCFTSCVNEFGSRTVNAKEESCANNCLDKFLKMTQRVSQRFQEHQILNAQANGAAM.

The Twin CX3C motif signature appears at 24–48 (CFTSCVNEFGSRTVNAKEESCANNC). Disulfide bonds link Cys-24–Cys-48 and Cys-28–Cys-44.

It belongs to the small Tim family. In terms of assembly, heterohexamer; composed of 3 copies of tim-9/tin-9.1 and 3 copies of tim-10/tin-10, named soluble 70 kDa complex. The complex associates with the tim-22 component of the TIM22 complex. Interacts with multi-pass transmembrane proteins in transit.

It is found in the mitochondrion inner membrane. In terms of biological role, mitochondrial intermembrane chaperone that participates in the import and insertion of multi-pass transmembrane proteins into the mitochondrial inner membrane. May also be required for the transfer of beta-barrel precursors from the TOM complex to the sorting and assembly machinery (SAM complex) of the outer membrane. Acts as a chaperone-like protein that protects the hydrophobic precursors from aggregation and guide them through the mitochondrial intermembrane space. The polypeptide is Mitochondrial import inner membrane translocase subunit Tim9 (tin-9.1) (Caenorhabditis briggsae).